The chain runs to 1495 residues: Collagen alpha-1(XVII) chain (1495 aa).

The segment covering 1 to 17 (MDSVTKKTRQDGSEVTE) has biased composition (basic and acidic residues). The segment at 1 to 138 (MDSVTKKTRQ…VRLQSASPSG (138 aa)) is disordered. The Cytoplasmic segment spans residues 1–435 (MDSVTKKTRQ…CGSCCSWWKW (435 aa)). A nonhelical region (NC16) region spans residues 1 to 535 (MDSVTKKTRQ…IERGYFRGER (535 aa)). A compositionally biased stretch (polar residues) spans 19–32 (QGGSSSGLKTSSHT). The span at 51 to 63 (SSGSGRLNSSSSG) shows a compositional bias: low complexity. Composition is skewed to polar residues over residues 64 to 80 (YRQTQSPSSTLTKSPGS) and 95 to 104 (EGSSSANSSP). The helical; Signal-anchor for type II membrane protein transmembrane segment at 436–456 (LLGLLLAWLLLLGLLFGLIAL) threads the bilayer. Residues 457 to 1495 (AEEVRKLKSR…GRRRRRSVGV (1039 aa)) lie on the Extracellular side of the membrane. Disordered stretches follow at residues 532 to 824 (RGER…EKGS), 847 to 999 (DLQG…SSSQ), 1160 to 1185 (EFSGLVGPPGPAGPPGPPGIPGSSGI), 1201 to 1226 (SISGIQGPPGPPGPPGPPGFSGTGLL), 1251 to 1278 (RSYISGPPGPPGPRGPPGPKGDSGLVAG), 1295 to 1336 (GGSI…GSYG), and 1396 to 1416 (MSYTGQGPPGPPGPPGPPGIS). The segment at 536–1482 (GEPGMKGDMG…KGEKGEKGEQ (947 aa)) is triple-helical region. Low complexity-rich tracts occupy residues 702–711 (PGAKGPAGQA) and 761–773 (RPGAKGEPGAPGK). The span at 786 to 807 (PGPPGPPGPIGPTGPPGVPGPV) shows a compositional bias: pro residues. Low complexity predominate over residues 809-818 (PAGLPGQQGP). 7 stretches are compositionally biased toward pro residues: residues 871-886 (PRGPPGLPGPSGPPGR), 901-910 (PPGPPGPPGP), 946-955 (PPGPPGPPGP), 981-993 (PPGPPGPPGPPGP), 1167-1179 (PPGPAGPPGPPGI), 1208-1218 (PPGPPGPPGPP), and 1257-1269 (PPGPPGPRGPPGP). Residues 1296 to 1308 (GSIGAEGSHGGSL) show a composition bias toward gly residues. Over residues 1309 to 1336 (GASSSYGSSMSSSMSSYSASMGSDGSYG) the composition is skewed to low complexity. The segment covering 1403–1413 (PPGPPGPPGPP) has biased composition (pro residues). Residue Asn-1424 is glycosylated (N-linked (GlcNAc...) asparagine). Residues 1435 to 1495 (THGTVRGPPG…GRRRRRSVGV (61 aa)) are disordered. Residues 1472–1481 (PKGEKGEKGE) are compositionally biased toward basic and acidic residues. Residues 1483 to 1495 (MYSGRRRRRSVGV) form a nonhelical region (NC1) region. Over residues 1486-1495 (GRRRRRSVGV) the composition is skewed to basic residues.

Homotrimers of alpha 1(XVII)chains. The intracellular/endo domain is disulfide-linked. Post-translationally, prolines at the third position of the tripeptide repeating unit (G-X-Y) are hydroxylated in some or all of the chains. In terms of processing, the ectodomain is shedded from the surface of keratinocytes resulting in a 120-kDa soluble form, also named as 120 kDa linear IgA disease antigen homolog. The shedding is mediated by membrane-bound metalloproteases. As to expression, cornea specific.

It localises to the cell junction. The protein resides in the hemidesmosome. Its subcellular location is the membrane. The protein localises to the secreted. It is found in the extracellular space. It localises to the extracellular matrix. The protein resides in the basement membrane. In terms of biological role, may play a role in the integrity of hemidesmosome and the attachment of basal keratinocytes to the underlying basement membrane. Functionally, the 120 kDa linear IgA disease antigen homolog is an anchoring filament component involved in dermal-epidermal cohesion. In Gallus gallus (Chicken), this protein is Collagen alpha-1(XVII) chain (COL17A1).